The primary structure comprises 278 residues: Energy-coupling factor transporter ATP-binding protein EcfA1 (278 aa).

Residues 5–240 (IEVRNLKYKY…EDLEELGLDQ (236 aa)) form the ABC transporter domain. 40–47 (GHNGSGKS) is a binding site for ATP.

This sequence belongs to the ABC transporter superfamily. Energy-coupling factor EcfA family. In terms of assembly, forms a stable energy-coupling factor (ECF) transporter complex composed of 2 membrane-embedded substrate-binding proteins (S component), 2 ATP-binding proteins (A component) and 2 transmembrane proteins (T component).

Its subcellular location is the cell membrane. Functionally, ATP-binding (A) component of a common energy-coupling factor (ECF) ABC-transporter complex. Unlike classic ABC transporters this ECF transporter provides the energy necessary to transport a number of different substrates. This is Energy-coupling factor transporter ATP-binding protein EcfA1 from Streptococcus sanguinis (strain SK36).